Here is a 505-residue protein sequence, read N- to C-terminus: Protein disulfide-isomerase A3 (505 aa).

Positions 1–24 (MRLRRLALFPGVALLLAAARLAAA) are cleaved as a signal peptide. The 109-residue stretch at 25-133 (SDVLELTDDN…IVSHLKKQAG (109 aa)) folds into the Thioredoxin 1 domain. Residues C57 and C60 each act as nucleophile in the active site. C57 and C60 are joined by a disulfide. K61 bears the N6-methyllysine mark. A disulfide bridge links C85 with C92. K129 bears the N6-succinyllysine mark. N6-acetyllysine is present on K152. K218 is modified (N6-succinyllysine). K252 carries the post-translational modification N6-acetyllysine. T319 is modified (phosphothreonine). A Thioredoxin 2 domain is found at 343–485 (SRDGKALERF…FISYLQREAT (143 aa)). K362 bears the N6-acetyllysine mark. Residues C406 and C409 each act as nucleophile in the active site. The cysteines at positions 406 and 409 are disulfide-linked. The segment at 484–505 (ATNPPVIQEEKPKKKKKAQEDL) is disordered. The segment covering 491–505 (QEEKPKKKKKAQEDL) has biased composition (basic and acidic residues). K494 bears the N6-acetyllysine mark. Positions 502–505 (QEDL) match the Prevents secretion from ER motif.

It belongs to the protein disulfide isomerase family. As to quaternary structure, part of the major histocompatibility complex class I (MHC I) peptide loading complex composed of TAP1, TAP2, B2M, MHC heavy chain, TAPBP, PDIA3, and CALR. Interacts with ERP27 and CANX. Interacts with SERPINA2 and with SERPINA1. Interacts with ATP2A2. Post-translationally, within the major histocompatibility complex class I (MHC I) peptide loading complex forms reversible disulfide-linked heterodimers with TAPBP as part of its protein folding chaperone activity. This is essential to assist the dynamic assembly of the MHC I complex with high affinity antigens in the endoplasmic reticulum. In terms of processing, phosphorylated.

It localises to the endoplasmic reticulum. The protein localises to the endoplasmic reticulum lumen. The protein resides in the melanosome. The enzyme catalyses Catalyzes the rearrangement of -S-S- bonds in proteins.. In terms of biological role, protein disulfide isomerase that catalyzes the formation, isomerization, and reduction or oxidation of disulfide bonds in client proteins and functions as a protein folding chaperone. Core component of the major histocompatibility complex class I (MHC I) peptide loading complex where it functions as an essential folding chaperone for TAPBP. Through TAPBP, assists the dynamic assembly of the MHC I complex with high affinity antigens in the endoplasmic reticulum. Therefore, plays a crucial role in the presentation of antigens to cytotoxic T cells in adaptive immunity. This Chlorocebus aethiops (Green monkey) protein is Protein disulfide-isomerase A3 (PDIA3).